The chain runs to 185 residues: Large ribosomal subunit protein uL5 (185 aa).

The protein belongs to the universal ribosomal protein uL5 family. In terms of assembly, part of the 50S ribosomal subunit; part of the 5S rRNA/L5/L18/L25 subcomplex. Contacts the 5S rRNA and the P site tRNA. Forms a bridge to the 30S subunit in the 70S ribosome.

In terms of biological role, this is one of the proteins that bind and probably mediate the attachment of the 5S RNA into the large ribosomal subunit, where it forms part of the central protuberance. In the 70S ribosome it contacts protein S13 of the 30S subunit (bridge B1b), connecting the 2 subunits; this bridge is implicated in subunit movement. Contacts the P site tRNA; the 5S rRNA and some of its associated proteins might help stabilize positioning of ribosome-bound tRNAs. This is Large ribosomal subunit protein uL5 from Rhodopseudomonas palustris (strain BisB18).